Reading from the N-terminus, the 496-residue chain is UDP-N-acetylmuramate--L-alanine ligase (496 aa).

ATP is bound at residue 122–128 (GTHGKTT).

Belongs to the MurCDEF family.

The protein resides in the cytoplasm. It catalyses the reaction UDP-N-acetyl-alpha-D-muramate + L-alanine + ATP = UDP-N-acetyl-alpha-D-muramoyl-L-alanine + ADP + phosphate + H(+). It functions in the pathway cell wall biogenesis; peptidoglycan biosynthesis. In terms of biological role, cell wall formation. This is UDP-N-acetylmuramate--L-alanine ligase from Mycobacterium avium (strain 104).